The primary structure comprises 252 residues: Imidazole glycerol phosphate synthase subunit HisF (252 aa).

Catalysis depends on residues Asp-11 and Asp-130.

This sequence belongs to the HisA/HisF family. As to quaternary structure, heterodimer of HisH and HisF.

Its subcellular location is the cytoplasm. The enzyme catalyses 5-[(5-phospho-1-deoxy-D-ribulos-1-ylimino)methylamino]-1-(5-phospho-beta-D-ribosyl)imidazole-4-carboxamide + L-glutamine = D-erythro-1-(imidazol-4-yl)glycerol 3-phosphate + 5-amino-1-(5-phospho-beta-D-ribosyl)imidazole-4-carboxamide + L-glutamate + H(+). It functions in the pathway amino-acid biosynthesis; L-histidine biosynthesis; L-histidine from 5-phospho-alpha-D-ribose 1-diphosphate: step 5/9. IGPS catalyzes the conversion of PRFAR and glutamine to IGP, AICAR and glutamate. The HisF subunit catalyzes the cyclization activity that produces IGP and AICAR from PRFAR using the ammonia provided by the HisH subunit. The sequence is that of Imidazole glycerol phosphate synthase subunit HisF from Bacillus cereus (strain ZK / E33L).